The primary structure comprises 523 residues: Mitochondrial distribution and morphology protein 12 (523 aa).

The region spanning 1–483 is the SMP-LTD domain; that stretch reads MSFDINWEKL…WPSWICVDMA (483 aa). Residues 108–117 are compositionally biased toward basic and acidic residues; sequence HEADIINDHD. Disordered regions lie at residues 108–160, 178–213, 270–313, and 483–523; these read HEAD…QYDE, SASTPKRTSPQRPPLISPRGEVTQQTLSKPKEPFQS, KTKE…NAKN, and AEND…KKED. Composition is skewed to acidic residues over residues 118–140 and 148–158; these read YGDEDDIDDDYDNDSDDYDDDEN and EDEENEESSQY. Composition is skewed to polar residues over residues 178–187 and 277–288; these read SASTPKRTSP and SGDQQQGKQTGK. A compositionally biased stretch (basic and acidic residues) spans 289–313; the sequence is ANEKGQKHKHEHEEEQGSDKQNAKN. Acidic residues predominate over residues 483 to 501; that stretch reads AENDDEEEDDDDDDHDEDN. The segment covering 502-523 has biased composition (basic and acidic residues); it reads EGRGRMRDTGDVDVRDHDKKED.

It belongs to the MDM12 family. Component of the ER-mitochondria encounter structure (ERMES) or MDM complex, composed of MMM1, MDM10, MDM12 and MDM34. An MMM1 homodimer associates with one molecule of MDM12 on each side in a pairwise head-to-tail manner, and the SMP-LTD domains of MMM1 and MDM12 generate a continuous hydrophobic tunnel for phospholipid trafficking.

The protein localises to the mitochondrion outer membrane. It localises to the endoplasmic reticulum membrane. In terms of biological role, component of the ERMES/MDM complex, which serves as a molecular tether to connect the endoplasmic reticulum (ER) and mitochondria. Components of this complex are involved in the control of mitochondrial shape and protein biogenesis, and function in nonvesicular lipid trafficking between the ER and mitochondria. MDM12 is required for the interaction of the ER-resident membrane protein MMM1 and the outer mitochondrial membrane-resident beta-barrel protein MDM10. The MDM12-MMM1 subcomplex functions in the major beta-barrel assembly pathway that is responsible for biogenesis of all mitochondrial outer membrane beta-barrel proteins, and acts in a late step after the SAM complex. The MDM10-MDM12-MMM1 subcomplex further acts in the TOM40-specific pathway after the action of the MDM12-MMM1 complex. Essential for establishing and maintaining the structure of mitochondria and maintenance of mtDNA nucleoids. The chain is Mitochondrial distribution and morphology protein 12 from Lodderomyces elongisporus (strain ATCC 11503 / CBS 2605 / JCM 1781 / NBRC 1676 / NRRL YB-4239) (Yeast).